We begin with the raw amino-acid sequence, 202 residues long: dTTP/UTP pyrophosphatase (202 aa).

The active-site Proton acceptor is D76.

Belongs to the Maf family. YhdE subfamily. It depends on a divalent metal cation as a cofactor.

It is found in the cytoplasm. The catalysed reaction is dTTP + H2O = dTMP + diphosphate + H(+). The enzyme catalyses UTP + H2O = UMP + diphosphate + H(+). Functionally, nucleoside triphosphate pyrophosphatase that hydrolyzes dTTP and UTP. May have a dual role in cell division arrest and in preventing the incorporation of modified nucleotides into cellular nucleic acids. This Neisseria gonorrhoeae (strain ATCC 700825 / FA 1090) protein is dTTP/UTP pyrophosphatase.